The primary structure comprises 337 residues: 1-aminocyclopropane-1-carboxylate deaminase (337 aa).

K50 carries the post-translational modification N6-(pyridoxal phosphate)lysine. The active-site Nucleophile is the S77.

The protein belongs to the ACC deaminase/D-cysteine desulfhydrase family. Homotrimer. Pyridoxal 5'-phosphate serves as cofactor.

The enzyme catalyses 1-aminocyclopropane-1-carboxylate + H2O = 2-oxobutanoate + NH4(+). Its function is as follows. Catalyzes a cyclopropane ring-opening reaction, the irreversible conversion of 1-aminocyclopropane-1-carboxylate (ACC) to ammonia and alpha-ketobutyrate. Allows growth on ACC as a nitrogen source. In Allorhizobium ampelinum (strain ATCC BAA-846 / DSM 112012 / S4) (Agrobacterium vitis (strain S4)), this protein is 1-aminocyclopropane-1-carboxylate deaminase.